We begin with the raw amino-acid sequence, 295 residues long: Zinc finger CCCH domain-containing protein 44 (295 aa).

A disordered region spans residues 1-31; that stretch reads MEAGGGKRAAPEGTNGAAKRARASESSQVGV. 2 C3H1-type zinc fingers span residues 32-60 and 98-126; these read GSKL…HNFP and SVKT…HGER. The KH domain maps to 166 to 230; the sequence is SATAKISVDA…DQIKHASAMV (65 aa). Residues 259–286 form a C3H1-type 3 zinc finger; that stretch reads NFKTKLCENFNKGSCTFGDRCHFAHGES.

This chain is Zinc finger CCCH domain-containing protein 44, found in Oryza sativa subsp. japonica (Rice).